A 739-amino-acid chain; its full sequence is MENETHYAEAVIDNGAFGTRTIRFETGRLARQAAGSAVAYLDDDTMVLSATSASKNPKDQLDFFPLTVDVEERMYAAGKIPGSFFRREGRPSEDAILTCRLIDRPLRPSFKKGLRNEIQVVATIMALNPDHLYDVVAINAASASTQLAGLPFSGPIGGVRVALIRGQWVAFPTHTELEDAVFDMVVAGRVLEDGDVAIMMVEAEATDKTIKLVEGGAEAPTEEVVAAGLDAAKPFIKVLCRAQADLAAKAAKPTGEFPIFLDFQDDVLEALTGAVKPELTQALTIAGKQEREAELDRVKGLAAEKLLPEFEGREKEISAAYRALTKSLVRERVIKEKKRIDGRGVTDIRTLAAEVEAIPRVHGSALFERGETQILGVTTLNMLRMEQQLDTLSPVTRKRYMHNYNFPPYSVGETGRVGSPKRREIGHGALAERAIVPVLPTREEFPYAIRQVSEALGSNGSTSMGSVCASTMSLLNAGVPLKAPVAGIAMGLISQEINGETHYVALTDILGAEDAFGDMDFKVAGTKEFVTALQLDTKLDGIPASVLAAALKQARDARLHILDVMMEAIDTPDEMSPNAPRIITVKIPVDKIGEVIGPKGKMINQIQEDTGADITIEDDGTIYIGAAQGSQAEAARATINGIANPTMPEVGERYLGTVVKTTTFGAFVSLLPGKDGLLHISQIRKLAGGKRVENVEDVLGVGAKVQVEIAEIDSRGKLSLIPVIEGEAGDDDKKDDADK.

Residues Asp-514 and Asp-520 each coordinate Mg(2+). A KH domain is found at 580-639; it reads PRIITVKIPVDKIGEVIGPKGKMINQIQEDTGADITIEDDGTIYIGAAQGSQAEAARATI. The S1 motif domain occupies 651–723; it reads GERYLGTVVK…SRGKLSLIPV (73 aa).

It belongs to the polyribonucleotide nucleotidyltransferase family. Mg(2+) is required as a cofactor.

It is found in the cytoplasm. It carries out the reaction RNA(n+1) + phosphate = RNA(n) + a ribonucleoside 5'-diphosphate. Its function is as follows. Involved in mRNA degradation. Catalyzes the phosphorolysis of single-stranded polyribonucleotides processively in the 3'- to 5'-direction. The polypeptide is Polyribonucleotide nucleotidyltransferase (Streptomyces coelicolor (strain ATCC BAA-471 / A3(2) / M145)).